Reading from the N-terminus, the 546-residue chain is Chaperonin GroEL (546 aa).

ATP-binding positions include 30–33 (TLGP), K51, 87–91 (DGTTT), G415, 479–481 (NAA), and D495. Positions 527-546 (DESAAPAMPGGMGGMGDMGM) are disordered. Positions 536–546 (GGMGGMGDMGM) are enriched in gly residues.

The protein belongs to the chaperonin (HSP60) family. As to quaternary structure, forms a cylinder of 14 subunits composed of two heptameric rings stacked back-to-back. Interacts with the co-chaperonin GroES.

The protein resides in the cytoplasm. The catalysed reaction is ATP + H2O + a folded polypeptide = ADP + phosphate + an unfolded polypeptide.. In terms of biological role, together with its co-chaperonin GroES, plays an essential role in assisting protein folding. The GroEL-GroES system forms a nano-cage that allows encapsulation of the non-native substrate proteins and provides a physical environment optimized to promote and accelerate protein folding. The chain is Chaperonin GroEL from Acidovorax ebreus (strain TPSY) (Diaphorobacter sp. (strain TPSY)).